A 1846-amino-acid chain; its full sequence is C2 domain-containing protein (1846 aa).

Positions Asn-16–Gln-36 are disordered. Positions Thr-17–Glu-26 are enriched in basic and acidic residues. Residues Ile-27–Gln-36 show a composition bias toward polar residues. Residues Val-497 to Lys-623 enclose the C2 domain. Composition is skewed to basic and acidic residues over residues Asp-1193–Lys-1211 and Lys-1230–Lys-1243. Disordered stretches follow at residues Asp-1193–Ser-1244, Lys-1346–Asp-1370, Lys-1456–Val-1635, Asn-1652–Arg-1692, and Glu-1827–Asn-1846. A coiled-coil region spans residues Ile-1349–Met-1506. 4 stretches are compositionally biased toward basic and acidic residues: residues Lys-1456–Lys-1474, Glu-1481–Glu-1629, Asn-1652–Glu-1663, and Lys-1670–Arg-1692. The segment covering Ser-1834–Asn-1846 has biased composition (basic residues).

The protein resides in the membrane. Binds calcium and phospholipids. Regulates microneme secretion. In Plasmodium falciparum (isolate 3D7), this protein is C2 domain-containing protein.